Reading from the N-terminus, the 1382-residue chain is Hepatocyte growth factor receptor (1382 aa).

The signal sequence occupies residues 1–24 (MKAPAVLAPGVLVLLFTLVRKSHG). At 25 to 935 (ECEEALAKSK…VQPDQNFTGL (911 aa)) the chain is on the extracellular side. Residues 27-516 (EEALAKSKMN…TGKKITKIPL (490 aa)) form the Sema domain. Asn45 carries N-linked (GlcNAc...) asparagine glycosylation. 4 disulfide bridges follow: Cys95–Cys101, Cys98–Cys160, Cys133–Cys141, and Cys173–Cys176. Asn106 carries an N-linked (GlcNAc...) asparagine glycan. N-linked (GlcNAc...) asparagine glycans are attached at residues Asn203 and Asn359. 2 disulfides stabilise this stretch: Cys299–Cys364 and Cys386–Cys398. Residues Asn400, Asn406, and Asn450 are each glycosylated (N-linked (GlcNAc...) asparagine). Intrachain disulfides connect Cys521-Cys539, Cys527-Cys562, Cys530-Cys546, and Cys542-Cys552. IPT/TIG domains are found at residues 564–656 (PTIY…FSYV), 658–740 (PVIT…FSYQ), and 743–837 (PTVY…LIYV). An O-linked (Man) threonine glycan is attached at Thr583. N-linked (GlcNAc...) asparagine glycosylation is found at Asn608 and Asn636. The O-linked (Man) threonine glycan is linked to Thr677. N-linked (GlcNAc...) asparagine glycosylation occurs at Asn751. Thr762 carries O-linked (Man) threonine glycosylation. N-linked (GlcNAc...) asparagine glycosylation is found at Asn786, Asn880, and Asn931. A helical membrane pass occupies residues 936-956 (IVGVVSISIILLLLLGLFLWL). At 957–1382 (KKRKQIKDLG…QDSVDDEVDT (426 aa)) the chain is on the cytoplasmic side. Phosphoserine is present on Ser967. A Phosphothreonine modification is found at Thr978. A phosphoserine mark is found at Ser991, Ser998, and Ser1001. At Tyr1004 the chain carries Phosphotyrosine. Residues 1079–1346 (VHFNEVIGRG…RISAIFSTFI (268 aa)) enclose the Protein kinase domain. ATP contacts are provided by residues 1085–1093 (IGRGHFGCV) and Lys1111. Asp1205 functions as the Proton acceptor in the catalytic mechanism. The interaction with RANBP9 stretch occupies residues 1213–1382 (LDEKFTVKVA…QDSVDDEVDT (170 aa)). Tyr1231 is modified (phosphotyrosine). A phosphotyrosine; by autocatalysis mark is found at Tyr1235 and Tyr1236. Residue Thr1290 is modified to Phosphothreonine. Positions 1321–1360 (WHPKAEMRPSFSELVSRISAIFSTFIGEHYVHVNTTYVNV) are interaction with MUC20. 2 positions are modified to phosphotyrosine; by autocatalysis: Tyr1350 and Tyr1357. At Tyr1366 the chain carries Phosphotyrosine.

This sequence belongs to the protein kinase superfamily. Tyr protein kinase family. In terms of assembly, heterodimer made of an alpha chain (50 kDa) and a beta chain (145 kDa) which are disulfide linked. Binds PLXNB1. Interacts when phosphorylated with downstream effectors including STAT3, PIK3R1, SRC, PCLG1, GRB2 and GAB1. Interacts with SPSB1, SPSB2 and SPSB4. Interacts with INPP5D/SHIP1. When phosphorylated at Tyr-1357, interacts with INPPL1/SHIP2. Interacts with RANBP9 and RANBP10, as well as SPSB1, SPSB2, SPSB3 and SPSB4. SPSB1 binding occurs in the presence and in the absence of HGF, however HGF treatment has a positive effect on this interaction. Interacts with MUC20; prevents interaction with GRB2 and suppresses hepatocyte growth factor-induced cell proliferation. Interacts with GRB10. Interacts with PTPN1 and PTPN2. Interacts with HSP90AA1 and HSP90AB1; the interaction suppresses MET kinase activity. Interacts with tensin TNS3. Interacts (when phosphorylated) with tensin TNS4 (via SH2 domain); the interaction increases MET protein stability by inhibiting MET endocytosis and subsequent lysosomal degradation. Autophosphorylated in response to ligand binding on Tyr-1235 and Tyr-1236 in the kinase domain leading to further phosphorylation of Tyr-1350 and Tyr-1357 in the C-terminal multifunctional docking site. Dephosphorylated by PTPRJ at Tyr-1350 and Tyr-1366. Dephosphorylated by PTPN1 and PTPN2. Post-translationally, ubiquitinated. Ubiquitination by CBL regulates the receptor stability and activity through proteasomal degradation. In terms of processing, O-mannosylation of IPT/TIG domains by TMEM260 is required for protein maturation. O-mannosylated residues are composed of single mannose glycans that are not elongated or modified.

It is found in the membrane. The catalysed reaction is L-tyrosyl-[protein] + ATP = O-phospho-L-tyrosyl-[protein] + ADP + H(+). In its inactive state, the C-terminal tail interacts with the catalytic domain and inhibits the kinase activity. Upon ligand binding, the C-terminal tail is displaced and becomes phosphorylated, thus increasing the kinase activity. In terms of biological role, receptor tyrosine kinase that transduces signals from the extracellular matrix into the cytoplasm by binding to hepatocyte growth factor/HGF ligand. Regulates many physiological processes including proliferation, scattering, morphogenesis and survival. Ligand binding at the cell surface induces autophosphorylation of MET on its intracellular domain that provides docking sites for downstream signaling molecules. Following activation by ligand, interacts with the PI3-kinase subunit PIK3R1, PLCG1, SRC, GRB2, STAT3 or the adapter GAB1. Recruitment of these downstream effectors by MET leads to the activation of several signaling cascades including the RAS-ERK, PI3 kinase-AKT, or PLCgamma-PKC. The RAS-ERK activation is associated with the morphogenetic effects while PI3K/AKT coordinates prosurvival effects. During embryonic development, MET signaling plays a role in gastrulation, development and migration of muscles and neuronal precursors, angiogenesis and kidney formation. In adults, participates in wound healing as well as organ regeneration and tissue remodeling. Also promotes differentiation and proliferation of hematopoietic cells. This chain is Hepatocyte growth factor receptor (MET), found in Loxodonta africana (African elephant).